Consider the following 138-residue polypeptide: Transcription antitermination protein NusB (138 aa).

This sequence belongs to the NusB family.

Involved in transcription antitermination. Required for transcription of ribosomal RNA (rRNA) genes. Binds specifically to the boxA antiterminator sequence of the ribosomal RNA (rrn) operons. This chain is Transcription antitermination protein NusB, found in Geobacter sulfurreducens (strain ATCC 51573 / DSM 12127 / PCA).